Reading from the N-terminus, the 289-residue chain is Stress response regulator protein 1 (289 aa).

Residues 77-136 (LDCTNSEMDEEDDFEDDEDDENLGLINPLHHKSSHGQISDYSPLTPFTEPPSASLSKPSF) are disordered. Over residues 83–98 (EMDEEDDFEDDEDDEN) the composition is skewed to acidic residues. Residues 127–136 (PSASLSKPSF) are compositionally biased toward polar residues. One can recognise a Response regulatory domain in the interval 163-281 (NFLIVDDNII…YDFVMDRIDE (119 aa)). Aspartate 214 is subject to 4-aspartylphosphate.

Its function is as follows. Required for stress adaptation, morphogenesis and virulence. This is Stress response regulator protein 1 (SRR1) from Scheffersomyces stipitis (strain ATCC 58785 / CBS 6054 / NBRC 10063 / NRRL Y-11545) (Yeast).